The primary structure comprises 222 residues: MTLLQPDKIILRQLGLQPYEPVSQAMHNFTDRRTETTPDELWLVQHQPVFTQGQAGKAEHLLMPGDIPVVQSDRGGQVTYHGPGQQVMYVMIDLKRNKVGVRQLVTAIEDTVINTLAHFHIESRARPDAPGVYVGEQKICSLGLRIRKGSSFHGLALNVAMDLSPFQRINPCGYAGMQMAQVSALAPGVGIEDVHPVLVQEFVHLLGYPKVELRNWNLHDYE.

One can recognise a BPL/LPL catalytic domain in the interval 35 to 210 (ETTPDELWLV…EFVHLLGYPK (176 aa)). Substrate contacts are provided by residues 74–81 (RGGQVTYH), 141–143 (SLG), and 154–156 (GLA). Cys172 serves as the catalytic Acyl-thioester intermediate.

It belongs to the LipB family.

The protein localises to the cytoplasm. It carries out the reaction octanoyl-[ACP] + L-lysyl-[protein] = N(6)-octanoyl-L-lysyl-[protein] + holo-[ACP] + H(+). It functions in the pathway protein modification; protein lipoylation via endogenous pathway; protein N(6)-(lipoyl)lysine from octanoyl-[acyl-carrier-protein]: step 1/2. Functionally, catalyzes the transfer of endogenously produced octanoic acid from octanoyl-acyl-carrier-protein onto the lipoyl domains of lipoate-dependent enzymes. Lipoyl-ACP can also act as a substrate although octanoyl-ACP is likely to be the physiological substrate. This chain is Octanoyltransferase, found in Serratia proteamaculans (strain 568).